A 273-amino-acid polypeptide reads, in one-letter code: NAD(P)H-hydrate epimerase (273 aa).

The YjeF N-terminal domain maps to 52-260 (AQQIDQELFN…GIIQKYELNL (209 aa)). (6S)-NADPHX is bound at residue 105-109 (NNGGD). Residues asparagine 106 and aspartate 170 each coordinate K(+). (6S)-NADPHX is bound by residues 174 to 180 (GFSFKGE) and aspartate 203. Serine 206 is a K(+) binding site.

The protein belongs to the NnrE/AIBP family. The cofactor is K(+).

The catalysed reaction is (6R)-NADHX = (6S)-NADHX. The enzyme catalyses (6R)-NADPHX = (6S)-NADPHX. Catalyzes the epimerization of the S- and R-forms of NAD(P)HX, a damaged form of NAD(P)H that is a result of enzymatic or heat-dependent hydration. This is a prerequisite for the S-specific NAD(P)H-hydrate dehydratase to allow the repair of both epimers of NAD(P)HX. In Branchiostoma floridae (Florida lancelet), this protein is NAD(P)H-hydrate epimerase.